Here is a 110-residue protein sequence, read N- to C-terminus: Insulin-2 (110 aa).

The N-terminal stretch at 1-24 (MALWIRFLPLLALLILWEPRPAQA) is a signal peptide. Disulfide bonds link Cys-31/Cys-96, Cys-43/Cys-109, and Cys-95/Cys-100. The propeptide at 57 to 87 (EVEDPQVAQLELGGGPGAGDLQTLALEVARQ) is c peptide.

It belongs to the insulin family. As to quaternary structure, heterodimer of a B chain and an A chain linked by two disulfide bonds.

It is found in the secreted. In terms of biological role, insulin decreases blood glucose concentration. It increases cell permeability to monosaccharides, amino acids and fatty acids. It accelerates glycolysis, the pentose phosphate cycle, and glycogen synthesis in liver. This is Insulin-2 (Ins2) from Rattus norvegicus (Rat).